The sequence spans 728 residues: 1,4-alpha-glucan branching enzyme GlgB (728 aa).

Asp-405 serves as the catalytic Nucleophile. Glu-458 acts as the Proton donor in catalysis.

It belongs to the glycosyl hydrolase 13 family. GlgB subfamily. In terms of assembly, monomer.

It carries out the reaction Transfers a segment of a (1-&gt;4)-alpha-D-glucan chain to a primary hydroxy group in a similar glucan chain.. It participates in glycan biosynthesis; glycogen biosynthesis. Its function is as follows. Catalyzes the formation of the alpha-1,6-glucosidic linkages in glycogen by scission of a 1,4-alpha-linked oligosaccharide from growing alpha-1,4-glucan chains and the subsequent attachment of the oligosaccharide to the alpha-1,6 position. The polypeptide is 1,4-alpha-glucan branching enzyme GlgB (Shigella flexneri serotype 5b (strain 8401)).